Here is a 146-residue protein sequence, read N- to C-terminus: Phage-like element PBSX protein XkdJ (146 aa).

The protein to B.subtilis YqbJ.

In Bacillus subtilis (strain 168), this protein is Phage-like element PBSX protein XkdJ (xkdJ).